The chain runs to 111 residues: Large ribosomal subunit protein uL22 (111 aa).

The protein belongs to the universal ribosomal protein uL22 family. In terms of assembly, part of the 50S ribosomal subunit.

Functionally, this protein binds specifically to 23S rRNA; its binding is stimulated by other ribosomal proteins, e.g. L4, L17, and L20. It is important during the early stages of 50S assembly. It makes multiple contacts with different domains of the 23S rRNA in the assembled 50S subunit and ribosome. The globular domain of the protein is located near the polypeptide exit tunnel on the outside of the subunit, while an extended beta-hairpin is found that lines the wall of the exit tunnel in the center of the 70S ribosome. This is Large ribosomal subunit protein uL22 from Xanthomonas oryzae pv. oryzae (strain PXO99A).